The primary structure comprises 325 residues: Holliday junction branch migration complex subunit RuvB (325 aa).

A large ATPase domain (RuvB-L) region spans residues 1–180 (MKNQLLDAKV…FGIHLKLNFY (180 aa)). ATP contacts are provided by residues Leu-19, Arg-20, Gly-61, Lys-64, Thr-65, Thr-66, 127-129 (EDF), Arg-170, Tyr-180, and Arg-217. Residue Thr-65 participates in Mg(2+) binding. Residues 181–251 (SCEELTKIVE…ITDYALNQLG (71 aa)) are small ATPAse domain (RuvB-S). Residues 254 to 325 (KLGLDSSDHK…ITANALKHLH (72 aa)) form a head domain (RuvB-H) region. Arg-290, Arg-309, and Arg-314 together coordinate DNA.

This sequence belongs to the RuvB family. As to quaternary structure, homohexamer. Forms an RuvA(8)-RuvB(12)-Holliday junction (HJ) complex. HJ DNA is sandwiched between 2 RuvA tetramers; dsDNA enters through RuvA and exits via RuvB. An RuvB hexamer assembles on each DNA strand where it exits the tetramer. Each RuvB hexamer is contacted by two RuvA subunits (via domain III) on 2 adjacent RuvB subunits; this complex drives branch migration. In the full resolvosome a probable DNA-RuvA(4)-RuvB(12)-RuvC(2) complex forms which resolves the HJ.

The protein resides in the cytoplasm. It carries out the reaction ATP + H2O = ADP + phosphate + H(+). Its function is as follows. The RuvA-RuvB-RuvC complex processes Holliday junction (HJ) DNA during genetic recombination and DNA repair, while the RuvA-RuvB complex plays an important role in the rescue of blocked DNA replication forks via replication fork reversal (RFR). RuvA specifically binds to HJ cruciform DNA, conferring on it an open structure. The RuvB hexamer acts as an ATP-dependent pump, pulling dsDNA into and through the RuvAB complex. RuvB forms 2 homohexamers on either side of HJ DNA bound by 1 or 2 RuvA tetramers; 4 subunits per hexamer contact DNA at a time. Coordinated motions by a converter formed by DNA-disengaged RuvB subunits stimulates ATP hydrolysis and nucleotide exchange. Immobilization of the converter enables RuvB to convert the ATP-contained energy into a lever motion, pulling 2 nucleotides of DNA out of the RuvA tetramer per ATP hydrolyzed, thus driving DNA branch migration. The RuvB motors rotate together with the DNA substrate, which together with the progressing nucleotide cycle form the mechanistic basis for DNA recombination by continuous HJ branch migration. Branch migration allows RuvC to scan DNA until it finds its consensus sequence, where it cleaves and resolves cruciform DNA. The protein is Holliday junction branch migration complex subunit RuvB of Orientia tsutsugamushi (strain Ikeda) (Rickettsia tsutsugamushi).